Here is a 74-residue protein sequence, read N- to C-terminus: UPF0352 protein PM1884 (74 aa).

Belongs to the UPF0352 family.

The protein is UPF0352 protein PM1884 of Pasteurella multocida (strain Pm70).